The sequence spans 475 residues: Protein FIZZY-RELATED 1 (475 aa).

The interval 1 to 27 (MEEDESTTPKKKSDSQLNLPPSMNRPT) is disordered. The span at 15 to 27 (SQLNLPPSMNRPT) shows a compositional bias: polar residues. WD repeat units lie at residues 166 to 203 (QDDFYLNLVDWSAQNVLAVGLGNCVYLWNACSSKVTKL), 207 to 246 (GVDETVCSVGWALRGTHLAIGTSSGTVQIWDVLRCKNIRT), 249 to 289 (GHRL…SKLK), 290 to 329 (GHKSEICGLKWSSDNRELASGGNDNKLFVWNQHSTQPVLR), 332 to 374 (EHAA…HLNC), 376 to 417 (DTNS…KLAT), and 420 to 459 (GHSYRVLYLAVSPDGQTIVTGAGDETLRFWNVFPSPKSQS).

It belongs to the WD repeat CDC20/Fizzy family. Associates with the APC/C complex. Interacts with CDC20-1, CDC20-2, CYCA1-1, CYCA1-2, CYCA3-4, CYCB1-1 and CYCB1-2. Binds to GIG1. As to expression, expressed in the root tip, predominantly in the root cap, quiescent center cells, surrounding stem cells and columella.

It localises to the nucleus. The protein operates within protein modification; protein ubiquitination. Activator protein that regulates the ubiquitin ligase activity and substrate specificity of the anaphase promoting complex/cyclosome (APC/C). Required for meristem organization and maintenance of quiescent center identity and stem cells. The polypeptide is Protein FIZZY-RELATED 1 (FZR1) (Arabidopsis thaliana (Mouse-ear cress)).